Here is a 214-residue protein sequence, read N- to C-terminus: Large ribosomal subunit protein uL18 (214 aa).

It belongs to the universal ribosomal protein uL18 family. As to quaternary structure, part of the 50S ribosomal subunit. Contacts the 5S and 23S rRNAs.

Functionally, this is one of the proteins that bind and probably mediate the attachment of the 5S RNA into the large ribosomal subunit, where it forms part of the central protuberance. The chain is Large ribosomal subunit protein uL18 from Aeropyrum pernix (strain ATCC 700893 / DSM 11879 / JCM 9820 / NBRC 100138 / K1).